The following is a 159-amino-acid chain: Putative ribosomal RNA large subunit methyltransferase H (159 aa).

Residues Leu-76, Gly-108, and 127-132 (FSKMTF) each bind S-adenosyl-L-methionine.

The protein belongs to the RNA methyltransferase RlmH family.

It localises to the cytoplasm. The catalysed reaction is pseudouridine(1915) in 23S rRNA + S-adenosyl-L-methionine = N(3)-methylpseudouridine(1915) in 23S rRNA + S-adenosyl-L-homocysteine + H(+). Specifically methylates the pseudouridine at position 1915 (m3Psi1915) in 23S rRNA. The polypeptide is Putative ribosomal RNA large subunit methyltransferase H (Methanococcus maripaludis (strain DSM 14266 / JCM 13030 / NBRC 101832 / S2 / LL)).